The primary structure comprises 327 residues: Tetraacyldisaccharide 4'-kinase (327 aa).

Thr52–Thr59 provides a ligand contact to ATP.

Belongs to the LpxK family.

It catalyses the reaction a lipid A disaccharide + ATP = a lipid IVA + ADP + H(+). It participates in glycolipid biosynthesis; lipid IV(A) biosynthesis; lipid IV(A) from (3R)-3-hydroxytetradecanoyl-[acyl-carrier-protein] and UDP-N-acetyl-alpha-D-glucosamine: step 6/6. Functionally, transfers the gamma-phosphate of ATP to the 4'-position of a tetraacyldisaccharide 1-phosphate intermediate (termed DS-1-P) to form tetraacyldisaccharide 1,4'-bis-phosphate (lipid IVA). The sequence is that of Tetraacyldisaccharide 4'-kinase from Methylorubrum extorquens (strain CM4 / NCIMB 13688) (Methylobacterium extorquens).